Here is a 208-residue protein sequence, read N- to C-terminus: Kininogen-1b (208 aa).

The first 23 residues, 1–23 (MRLWFCLSFFIVLCLEHFPETLA), serve as a signal peptide directing secretion. The segment covering 27–44 (NVPESEEKTEQYLRDLPK) has biased composition (basic and acidic residues). Residues 27-208 (NVPESEEKTE…RGKFHSQSHV (182 aa)) are disordered.

The protein belongs to the bradykinin-related peptide family. Expressed by the skin glands.

It localises to the secreted. Functionally, in vitro, produces constriction of guinea pig ileum smooth muscle. May target bradykinin receptors (BDKRB). This is Kininogen-1b from Bombina maxima (Giant fire-bellied toad).